The primary structure comprises 489 residues: Betaine aldehyde dehydrogenase (489 aa).

Thr-26 and Asp-93 together coordinate K(+). An NAD(+)-binding site is contributed by 150–152 (GAW). The Charge relay system role is filled by Lys-162. 176-179 (KPSE) is a binding site for NAD(+). Val-180 is a K(+) binding site. 229 to 232 (GVET) is a binding site for NAD(+). Leu-245 is a K(+) binding site. Catalysis depends on Glu-251, which acts as the Proton acceptor. Positions 253, 285, and 386 each coordinate NAD(+). Cys-285 serves as the catalytic Nucleophile. At Cys-285 the chain carries Cysteine sulfenic acid (-SOH). 2 residues coordinate K(+): Lys-456 and Gly-459. The Charge relay system role is filled by Glu-463.

Belongs to the aldehyde dehydrogenase family. Dimer of dimers. K(+) serves as cofactor.

The enzyme catalyses betaine aldehyde + NAD(+) + H2O = glycine betaine + NADH + 2 H(+). It functions in the pathway amine and polyamine biosynthesis; betaine biosynthesis via choline pathway; betaine from betaine aldehyde: step 1/1. Functionally, involved in the biosynthesis of the osmoprotectant glycine betaine. Catalyzes the irreversible oxidation of betaine aldehyde to the corresponding acid. The sequence is that of Betaine aldehyde dehydrogenase from Burkholderia ambifaria (strain ATCC BAA-244 / DSM 16087 / CCUG 44356 / LMG 19182 / AMMD) (Burkholderia cepacia (strain AMMD)).